The following is a 404-amino-acid chain: MSILKKYKDMYPDENGKFGIYGGKFVPETLMPAIAELEEAFKRFWINNEGNFREEFYALLRDYVGRPTPLYYAERLSEELGCKVYLKREDLAHLGAHKINNALGQALLAKKMGKKRVIAETGAGQHGVATAAACAKLGLECIIYMGAKDVERQKLNVFRMELMGAKVIPVFGGSQTLKDAVNEALRDWTTNVRTTYYLLGSALGPHPYPMMVREFQRVIGKELKEQILEKEGRLPDVIVACVGGGSNAIGAFYEFLDDDVELYAVEAGGKGIETGMHGASLCAGEVGVLHGAKIYVKEDEFGQIEESYSISAGLDYPGVGPELSFLKDEGRIKAVCVTDDEALEAFQLLCRLEGILPALESSHALAYAVKLADKLDKDDIMVINLSGRGDKDVQTVAKALGREI.

Lys-98 carries the post-translational modification N6-(pyridoxal phosphate)lysine.

The protein belongs to the TrpB family. In terms of assembly, tetramer of two alpha and two beta chains. The cofactor is pyridoxal 5'-phosphate.

The enzyme catalyses (1S,2R)-1-C-(indol-3-yl)glycerol 3-phosphate + L-serine = D-glyceraldehyde 3-phosphate + L-tryptophan + H2O. Its pathway is amino-acid biosynthesis; L-tryptophan biosynthesis; L-tryptophan from chorismate: step 5/5. Functionally, the beta subunit is responsible for the synthesis of L-tryptophan from indole and L-serine. The sequence is that of Tryptophan synthase beta chain (trpB) from Methanocaldococcus jannaschii (strain ATCC 43067 / DSM 2661 / JAL-1 / JCM 10045 / NBRC 100440) (Methanococcus jannaschii).